The chain runs to 1214 residues: Protein charlatan (1214 aa).

3 disordered regions span residues 1–20, 213–238, and 250–284; these read MATL…QSSN, HVNQ…RQEH, and SANA…GGRK. Residues 258–276 are compositionally biased toward low complexity; sequence AQSTPTSAPSNSSGGSTSS. 2 C2H2-type zinc fingers span residues 305-327 and 333-356; these read YACT…ENIH and FQCY…LRMH. Disordered stretches follow at residues 367-397 and 463-488; these read RRHV…NVTI and PVAS…SGLL. A compositionally biased stretch (gly residues) spans 473-485; that stretch reads GSHGGNGNGGSGS. 2 consecutive C2H2-type zinc fingers follow at residues 496–518 and 522–545; these read FTCC…LNTH and FVCL…LKVH. 3 disordered regions span residues 741–790, 848–946, and 1062–1084; these read SASS…ATSP, NDED…SGPS, and LSTP…SNAS. Low complexity-rich tracts occupy residues 855-871, 885-896, 923-946, and 1071-1084; these read QQHQ…QQQQ, NNNNNNNSNNNN, SPGT…SGPS, and KAAP…SNAS.

Expressed in the PNS and CNS. In early blastoderm stages, it is ubiquitously expressed, then, before stage 5, it disappears from the poles of the embryo and faint stripes are visible. At stage 5, it also accumulates in the dorsal region, cephalic furrow ectodermal patches between the tracheal pits, where neurons of the PNS appear. In older embryos (stage 15) a strong expression is mostly restricted to the central nervous system (CNS) and PNS. In PNS, the pattern suggests that expression occur in many of the neurons of the ventral, lateral and dorsal clusters of neurons. In third instar wing disks, it is expressed in rows of cells on either side of the prospective anterior wing margin and in groups of cells that coincide with proneural clusters of ac/sc expression. Also expressed independently of ac/sc in certain areas of the disk, such as the postnotum and posterior dorsal proximal wing. Expressed in the proneural clusters of the leg disks and in the eye/antenna disk.

Its subcellular location is the nucleus. Probable transcription factor involved in the development of the adult pattern of macrochaetae. Required for accumulation of achaete (ac) and scute (sc) in proneural clusters. Probably acts by binding to the proneural cluster-specific enhancers of the ac/sc complex and increasing enhancer efficiency, thereby acting as a stimulator of ac/sc expression in proneural clusters. Also required for correct development of the embryonic/larval peripheral nervous system (PNS). The protein is Protein charlatan (chn) of Drosophila melanogaster (Fruit fly).